A 337-amino-acid chain; its full sequence is Tetraacyldisaccharide 4'-kinase (337 aa).

Residue 72–79 participates in ATP binding; it reads TVGGSGKT.

It belongs to the LpxK family.

The catalysed reaction is a lipid A disaccharide + ATP = a lipid IVA + ADP + H(+). Its pathway is glycolipid biosynthesis; lipid IV(A) biosynthesis; lipid IV(A) from (3R)-3-hydroxytetradecanoyl-[acyl-carrier-protein] and UDP-N-acetyl-alpha-D-glucosamine: step 6/6. Transfers the gamma-phosphate of ATP to the 4'-position of a tetraacyldisaccharide 1-phosphate intermediate (termed DS-1-P) to form tetraacyldisaccharide 1,4'-bis-phosphate (lipid IVA). The sequence is that of Tetraacyldisaccharide 4'-kinase from Shewanella sediminis (strain HAW-EB3).